We begin with the raw amino-acid sequence, 469 residues long: Phosphatidylcholine:ceramide cholinephosphotransferase 1 (469 aa).

Positions 40–177 (TTKIGPKLET…GDKPASPHDR (138 aa)) are disordered. Composition is skewed to basic and acidic residues over residues 72 to 91 (AAEK…HEET), 100 to 117 (SHHD…GDGK), and 162 to 177 (VRLE…PHDR). Helical transmembrane passes span 186–206 (LVAF…LSWI), 231–251 (LRLC…LILF), 262–282 (LCFI…VTPV), 300–320 (TFSL…LNLF), 327–347 (LCGD…ALFI), and 355–375 (FYIL…FLVL). Histidine 336 is an active-site residue. Residues 376–469 (SHGHYTIDVI…RNGAARPAFE (94 aa)) lie on the Cytoplasmic side of the membrane. Residues histidine 379 and aspartate 383 contribute to the active site.

The protein belongs to the sphingomyelin synthase family.

Its subcellular location is the golgi apparatus membrane. It carries out the reaction an N-acylsphing-4-enine + a 1,2-diacyl-sn-glycero-3-phosphocholine = a sphingomyelin + a 1,2-diacyl-sn-glycerol. It catalyses the reaction an N-acyl-15-methylhexadecasphing-4-enine + a 1,2-diacyl-sn-glycero-3-phosphocholine = an N-acyl-15-methylhexadecasphing-4-enine-1-phosphocholine + a 1,2-diacyl-sn-glycerol. Its pathway is lipid metabolism; sphingolipid metabolism. Its function is as follows. Sphingomyelin synthases (SM synthase or SMS) synthesize the sphingolipid sphingomyelin (SM) through transfer of the phosphatidyl head group of 1,2-diacyl-sn-glycero-3-phosphocholine (phosphatidylcholine, PC) on to the primary hydroxyl of ceramide (N-acylsphingoid base), yielding 1,2-diacyl-sn-glycerol (diacylglycerol, DAG) as a side product. Functions as a bidirectional lipid cholinephosphotransferases capable of converting PC and ceramide to SM and DAG and vice versa depending on the respective levels of ceramide and DAG as phosphocholine acceptors, respectively. The polypeptide is Phosphatidylcholine:ceramide cholinephosphotransferase 1 (sms-1) (Caenorhabditis elegans).